A 199-amino-acid chain; its full sequence is mRNA export protein mlo3 (199 aa).

The disordered stretch occupies residues 1 to 41 (MSMELDQSLDAIIASKPKGGIRKRRARSNKPKPTKNAKPAV). Residues 19–35 (GGIRKRRARSNKPKPTK) show a composition bias toward basic residues. An RRM domain is found at 55 to 134 (SKIIVSNLPT…RKMKVEIILD (80 aa)). The tract at residues 144–199 (ARVSPASNASATASKNGAKSSKRKTTRRRRTPNRPKKSAEELDKEMDDYFGSNEKE) is disordered. A compositionally biased stretch (polar residues) spans 148–161 (PASNASATASKNGA). Positions 163–179 (SSKRKTTRRRRTPNRPK) are enriched in basic residues.

In terms of assembly, interacts with rpn15/dss1, mex67 and uap56.

Its subcellular location is the nucleus. In terms of biological role, has a role in the mRNA export process. Interferes with mitotic chromosome segregation when overexpressed. In Schizosaccharomyces pombe (strain 972 / ATCC 24843) (Fission yeast), this protein is mRNA export protein mlo3 (mlo3).